We begin with the raw amino-acid sequence, 224 residues long: UPF0441 protein PC1_0312 (224 aa).

The tract at residues 178-224 (PKTALAPKPATTSTITRGGFGETVAKQNSMQRSSASSSSSSSRSMGG) is disordered. The segment covering 209–224 (RSSASSSSSSSRSMGG) has biased composition (low complexity).

It belongs to the UPF0441 family.

The polypeptide is UPF0441 protein PC1_0312 (Pectobacterium carotovorum subsp. carotovorum (strain PC1)).